Here is a 214-residue protein sequence, read N- to C-terminus: 2-phospho-L-lactate guanylyltransferase (214 aa).

It belongs to the CofC family. Homodimer.

The enzyme catalyses (2S)-2-phospholactate + GTP + H(+) = (2S)-lactyl-2-diphospho-5'-guanosine + diphosphate. It participates in cofactor biosynthesis; coenzyme F420 biosynthesis. Functionally, guanylyltransferase that catalyzes the activation of (2S)-2-phospholactate (2-PL) as (2S)-lactyl-2-diphospho-5'-guanosine, via the condensation of 2-PL with GTP. It is involved in the biosynthesis of coenzyme F420, a hydride carrier cofactor. The chain is 2-phospho-L-lactate guanylyltransferase from Methanoregula boonei (strain DSM 21154 / JCM 14090 / 6A8).